A 278-amino-acid chain; its full sequence is Thiazole synthase (278 aa).

Lys107 functions as the Schiff-base intermediate with DXP in the catalytic mechanism. Residues Gly168, 194–195 (AG), and 216–217 (AS) each bind 1-deoxy-D-xylulose 5-phosphate.

This sequence belongs to the ThiG family. In terms of assembly, homotetramer. Forms heterodimers with either ThiH or ThiS.

The protein resides in the cytoplasm. It carries out the reaction [ThiS sulfur-carrier protein]-C-terminal-Gly-aminoethanethioate + 2-iminoacetate + 1-deoxy-D-xylulose 5-phosphate = [ThiS sulfur-carrier protein]-C-terminal Gly-Gly + 2-[(2R,5Z)-2-carboxy-4-methylthiazol-5(2H)-ylidene]ethyl phosphate + 2 H2O + H(+). The protein operates within cofactor biosynthesis; thiamine diphosphate biosynthesis. In terms of biological role, catalyzes the rearrangement of 1-deoxy-D-xylulose 5-phosphate (DXP) to produce the thiazole phosphate moiety of thiamine. Sulfur is provided by the thiocarboxylate moiety of the carrier protein ThiS. In vitro, sulfur can be provided by H(2)S. The protein is Thiazole synthase of Corynebacterium jeikeium (strain K411).